Consider the following 424-residue polypeptide: Poly-cysteine and histidine-tailed protein (424 aa).

Positions M1–G17 are cleaved as a signal peptide. Residue N291 is glycosylated (N-linked (GlcNAc...) asparagine). Basic and acidic residues predominate over residues V372–N390. Residues V372 to H424 are disordered. An N-linked (GlcNAc...) asparagine glycan is attached at N397.

Post-translationally, glycosylated. Expressed in larval tissues like cuticle, hypodermis and muscle (at protein level). Note=Not excreted into striated muscle fibers or nurse cell.

The protein resides in the secreted. Binds iron and zinc. May bind nickel. This chain is Poly-cysteine and histidine-tailed protein, found in Trichinella spiralis (Trichina worm).